Consider the following 1583-residue polypeptide: Methyl-CpG-binding domain protein 5/6 homolog sba (1583 aa).

Positions 81–115 are disordered; it reads AVHQQQQQHHHQQQQQQQHQQQQQILPAGLVNGNG. The span at 83–104 shows a compositional bias: low complexity; sequence HQQQQQHHHQQQQQQQHQQQQQ. The MBD domain maps to 238–308; that stretch reads RKTATSYNGN…YLFDFNAQVP (71 aa). 7 disordered regions span residues 427–457, 556–579, 630–694, 839–862, 940–980, 1179–1247, and 1287–1339; these read NKLPATNRTATTPTPAPTPPPQHPNGMPTSQ, EPIVHSSQQQQQQQQQQLQQQQQL, VTLV…QTQV, AELHPQPGGGYIVSQPSPVAAASS, PPAQ…ISPQ, VMSR…RSIC, and QESP…SFPL. The span at 430–439 shows a compositional bias: low complexity; sequence PATNRTATTP. Pro residues predominate over residues 440 to 449; it reads TPAPTPPPQH. Residues 563 to 579 are compositionally biased toward low complexity; it reads QQQQQQQQQQLQQQQQL. The span at 658-677 shows a compositional bias: polar residues; sequence AISTSHESPRQSLSSPTDSV. Composition is skewed to low complexity over residues 679–693 and 851–862; these read SAKSTPSASPKPQTQ and VSQPSPVAAASS. Polar residues-rich tracts occupy residues 1179–1195, 1216–1240, and 1287–1313; these read VMSRQGTAASPPDTTTC, CVSSSEPDAAVSPQSTESRQSPSST, and QESPTTTQLLSSVPTAQPTVEKTTVRT. Low complexity predominate over residues 1323 to 1333; the sequence is RGAARAAPSAS. One can recognise a PWWP domain in the interval 1346–1408; that stretch reads IGELIWGPAR…VNSLQSLSEG (63 aa). The stretch at 1415-1446 forms a coiled coil; that stretch reads AQKDTRKSRKLNSQLERAIQEAMTELDNISAS. The tract at residues 1471 to 1497 is disordered; the sequence is IGGQQQYQQQQQQQQQQQSPSSTNNKI. The span at 1474–1488 shows a compositional bias: low complexity; sequence QQQYQQQQQQQQQQQ.

Component of the polycomb repressive deubiquitinase (PR-DUB) complex, at least composed of caly/calypso, Asx and sba (MDB5/6 homolog). Interacts (via MBD domain) with Asx (via PHD domain); the interaction is important for the stability of the PR-DUB complex.

Non-catalytic component of the polycomb repressive deubiquitinase (PR-DUB) complex, a complex that specifically mediates deubiquitination of histone H2A monoubiquitinated at 'Lys-119' (H2AK118ub1). Important for maintaining stability of the PR-DUB complex. Probable epigenetic regulator involved in developmental pattern formation and eye development. This Drosophila melanogaster (Fruit fly) protein is Methyl-CpG-binding domain protein 5/6 homolog sba.